Here is a 1625-residue protein sequence, read N- to C-terminus: Probable cation-transporting ATPase I (1625 aa).

A run of 8 helical transmembrane segments spans residues 148–168, 177–197, 358–378, 637–657, 673–693, 778–798, 968–988, and 997–1017; these read VVSA…PNSA, LAIL…GATV, LIAA…AGAI, ASES…LLLV, WLNP…WSAA, ILAV…ALLV, LTSK…ALAL, and AVAD…PLVA. The active-site 4-aspartylphosphate intermediate is Asp1053. 2 residues coordinate Mg(2+): Asp1340 and Asp1344. 3 helical membrane-spanning segments follow: residues 1401-1421, 1432-1452, and 1547-1567; these read ILVG…AFGA, LLVN…TSQF, and VIAT…TPVI.

This sequence belongs to the cation transport ATPase (P-type) (TC 3.A.3) family.

The protein resides in the cell membrane. The catalysed reaction is ATP + H2O = ADP + phosphate + H(+). This chain is Probable cation-transporting ATPase I (ctpI), found in Mycobacterium tuberculosis (strain CDC 1551 / Oshkosh).